The chain runs to 478 residues: Antiviral innate immune response effector IFIT1 (478 aa).

6 TPR repeats span residues 52 to 85 (VGIHNLLAYVKHLKGQNEEALKSLKEAEDLMQKE), 95 to 128 (LVTWSNFAWVYYHMGRLAEAQAYLDKVENICKKP), 139 to 174 (PEIDCEEGWALLKCGGKNYERAKACFEKALEGDHEN), 183 to 216 (ISAYRLDGFKLATKGYRQFSLLPLRQAVSLNPDN), 218 to 249 (YLKVLLALKLQDNGQEAEGEKYLEEALANMSS), and 251 to 284 (TYVFRYAAKFYRRKGSVDKALELLKKALQETPTS). Trp147 provides a ligand contact to mRNA. Gly190 contributes to the RNA binding site. Residues Lys259, His289, Gln290, and Lys336 each contribute to the RNA site. TPR repeat units follow at residues 305–339 (ATKGQPRGQNREKIDKMIRLAIFHFESAVENKPTF), 340–373 (EVAHLDLARMYIEAGNHRKAEETFQKLLCMKPVV), 378–412 (QDIHLQYARFQEFQKKSEINAIIHYLKAIKIEQTS), and 437–470 (LESLSLLGFVYKLKGNMNEALEYYERALRLAADF).

It belongs to the IFIT family. In terms of assembly, component of an interferon-dependent multiprotein complex, at least composed of IFIT1, IFIT2 and IFIT3. Interacts (via TPR repeats 1-4) with RPL15. Interacts with STING1/MITA; could disrupt STING1 interaction with MAVS or TBK1, acting as a negative-feedback regulator of virus-triggered signaling. Interacts with EIF3E; this could be an alternative way to inhibit translation. Post-translationally, phosphorylated. In terms of processing, ISGylated.

It localises to the cytoplasm. In terms of biological role, plays a key role in the innate immune response as part of an interferon-dependent multiprotein complex, recognizing and sequestering viral RNAs that lack host-specific 2'-O-methylation at their 5' cap. By distinguishing these RNAs from host mRNAs, inhibits their translation by competing with the translation initiation factor eIF4E. Could also prevent viral replication through its interaction with DNA replication origin-binding protein E1 of several viruses. Causes the translocation of E1 from the nucleus to the cytoplasm and can also inhibit its helicase activity in vitro. The sequence is that of Antiviral innate immune response effector IFIT1 from Macaca fascicularis (Crab-eating macaque).